The chain runs to 1003 residues: Alpha-1,4 glucan phosphorylase L isozyme, chloroplastic/amyloplastic (1003 aa).

A chloroplast-targeting transit peptide spans 1–64 (MASMTMRFHP…RRRSAFSVKC (64 aa)). Disordered regions lie at residues 71 to 91 (KQKV…SSFA) and 526 to 593 (SSEE…KKLP). The span at 537–553 (GEEEETSKEGGEEEEEK) shows a compositional bias: acidic residues. Residues 569–580 (EVEKAIAEKDGT) are compositionally biased toward basic and acidic residues. Lys-849 carries the post-translational modification N6-(pyridoxal phosphate)lysine.

It belongs to the glycogen phosphorylase family. It depends on pyridoxal 5'-phosphate as a cofactor. As to expression, found predominantly in cotyledons and early seed coat.

Its subcellular location is the plastid. It is found in the chloroplast. The protein resides in the amyloplast. It carries out the reaction [(1-&gt;4)-alpha-D-glucosyl](n) + phosphate = [(1-&gt;4)-alpha-D-glucosyl](n-1) + alpha-D-glucose 1-phosphate. Its function is as follows. Phosphorylase is an important allosteric enzyme in carbohydrate metabolism. Enzymes from different sources differ in their regulatory mechanisms and in their natural substrates. However, all known phosphorylases share catalytic and structural properties. Functionally, the L isoform exhibits higher affinity for unbranched substrates such as glucan-like amylose and maltodextrin. This Vicia faba (Broad bean) protein is Alpha-1,4 glucan phosphorylase L isozyme, chloroplastic/amyloplastic (PHO1).